The chain runs to 1405 residues: DNA-directed RNA polymerase subunit beta' (1405 aa).

Zn(2+) is bound by residues Cys-70, Cys-72, Cys-85, and Cys-88. Residues Asp-460, Asp-462, and Asp-464 each coordinate Mg(2+). Zn(2+)-binding residues include Cys-814, Cys-888, Cys-895, and Cys-898.

This sequence belongs to the RNA polymerase beta' chain family. In terms of assembly, the RNAP catalytic core consists of 2 alpha, 1 beta, 1 beta' and 1 omega subunit. When a sigma factor is associated with the core the holoenzyme is formed, which can initiate transcription. Mg(2+) is required as a cofactor. The cofactor is Zn(2+).

The enzyme catalyses RNA(n) + a ribonucleoside 5'-triphosphate = RNA(n+1) + diphosphate. In terms of biological role, DNA-dependent RNA polymerase catalyzes the transcription of DNA into RNA using the four ribonucleoside triphosphates as substrates. This Shewanella sp. (strain ANA-3) protein is DNA-directed RNA polymerase subunit beta'.